We begin with the raw amino-acid sequence, 446 residues long: Exodeoxyribonuclease 7 large subunit (446 aa).

The protein belongs to the XseA family. As to quaternary structure, heterooligomer composed of large and small subunits.

It is found in the cytoplasm. It carries out the reaction Exonucleolytic cleavage in either 5'- to 3'- or 3'- to 5'-direction to yield nucleoside 5'-phosphates.. In terms of biological role, bidirectionally degrades single-stranded DNA into large acid-insoluble oligonucleotides, which are then degraded further into small acid-soluble oligonucleotides. The sequence is that of Exodeoxyribonuclease 7 large subunit from Streptococcus gordonii (strain Challis / ATCC 35105 / BCRC 15272 / CH1 / DL1 / V288).